The primary structure comprises 451 residues: Trigger factor (451 aa).

Positions 165–250 (DDKLTIDFEG…LRQIQVREAL (86 aa)) constitute a PPIase FKBP-type domain.

This sequence belongs to the FKBP-type PPIase family. Tig subfamily.

It is found in the cytoplasm. It catalyses the reaction [protein]-peptidylproline (omega=180) = [protein]-peptidylproline (omega=0). In terms of biological role, involved in protein export. Acts as a chaperone by maintaining the newly synthesized protein in an open conformation. Functions as a peptidyl-prolyl cis-trans isomerase. This Helicobacter pylori (strain J99 / ATCC 700824) (Campylobacter pylori J99) protein is Trigger factor (tig).